The chain runs to 331 residues: Tyrosine--tRNA ligase (331 aa).

L-tyrosine contacts are provided by Tyr-31, Tyr-155, Gln-159, Asp-162, and Gln-177. Positions 218–222 (KMSKS) match the 'KMSKS' region motif. Residue Lys-221 coordinates ATP.

Belongs to the class-I aminoacyl-tRNA synthetase family. TyrS type 4 subfamily. In terms of assembly, homodimer.

It is found in the cytoplasm. The catalysed reaction is tRNA(Tyr) + L-tyrosine + ATP = L-tyrosyl-tRNA(Tyr) + AMP + diphosphate + H(+). In terms of biological role, catalyzes the attachment of tyrosine to tRNA(Tyr) in a two-step reaction: tyrosine is first activated by ATP to form Tyr-AMP and then transferred to the acceptor end of tRNA(Tyr). This chain is Tyrosine--tRNA ligase, found in Thermoplasma volcanium (strain ATCC 51530 / DSM 4299 / JCM 9571 / NBRC 15438 / GSS1).